A 2310-amino-acid polypeptide reads, in one-letter code: Peroxide stress-activated histidine kinase mak2 (2310 aa).

The 281-residue stretch at 12-292 (DYAISQLGEF…SATDLCYTIV (281 aa)) folds into the Protein kinase domain. The GAF domain occupies 1450–1592 (RLGPLLTTVI…LLSQQIAISV (143 aa)). The Histidine kinase domain maps to 1760–1986 (NMSHELRTPF…TFWFHVQLRN (227 aa)). The residue at position 1763 (histidine 1763) is a Phosphohistidine; by autocatalysis. The Response regulatory domain maps to 2180-2303 (YALIAEDNLI…QLVNAVREFV (124 aa)). At aspartate 2232 the chain carries 4-aspartylphosphate.

It is found in the cytoplasm. It carries out the reaction ATP + protein L-histidine = ADP + protein N-phospho-L-histidine.. In terms of biological role, involved in the control of the SAPK-dependent transcriptional response to peroxide stress. Regulates sty1 activity. This Schizosaccharomyces pombe (strain 972 / ATCC 24843) (Fission yeast) protein is Peroxide stress-activated histidine kinase mak2 (mak2).